We begin with the raw amino-acid sequence, 122 residues long: Protein NIM1-INTERACTING 2 (122 aa).

Residues 1-22 (MNNSLKKEERVEEDNGKSDGNR) are compositionally biased toward basic and acidic residues. The segment at 1-28 (MNNSLKKEERVEEDNGKSDGNRGKPSTE) is disordered. The tract at residues 39-45 (DEFFKIL) is involved in NPR1/NIM1 interaction. Residues 70 to 74 (KKRKR) carry the Nuclear localization signal motif.

Interacts with NPR1 N-terminal region.

It is found in the nucleus. The chain is Protein NIM1-INTERACTING 2 from Arabidopsis thaliana (Mouse-ear cress).